The following is a 340-amino-acid chain: Ketol-acid reductoisomerase (NADP(+)) (340 aa).

Residues methionine 1 to threonine 182 enclose the KARI N-terminal Rossmann domain. NADP(+) is bound by residues tyrosine 24–glutamine 27, arginine 48, serine 51, serine 53, and aspartate 83–glutamine 86. Histidine 108 is a catalytic residue. Glycine 134 provides a ligand contact to NADP(+). A KARI C-terminal knotted domain is found at asparagine 183–isoleucine 329. Positions 191, 195, 227, and 231 each coordinate Mg(2+). Serine 252 serves as a coordination point for substrate.

Belongs to the ketol-acid reductoisomerase family. The cofactor is Mg(2+).

It catalyses the reaction (2R)-2,3-dihydroxy-3-methylbutanoate + NADP(+) = (2S)-2-acetolactate + NADPH + H(+). The enzyme catalyses (2R,3R)-2,3-dihydroxy-3-methylpentanoate + NADP(+) = (S)-2-ethyl-2-hydroxy-3-oxobutanoate + NADPH + H(+). Its pathway is amino-acid biosynthesis; L-isoleucine biosynthesis; L-isoleucine from 2-oxobutanoate: step 2/4. It functions in the pathway amino-acid biosynthesis; L-valine biosynthesis; L-valine from pyruvate: step 2/4. In terms of biological role, involved in the biosynthesis of branched-chain amino acids (BCAA). Catalyzes an alkyl-migration followed by a ketol-acid reduction of (S)-2-acetolactate (S2AL) to yield (R)-2,3-dihydroxy-isovalerate. In the isomerase reaction, S2AL is rearranged via a Mg-dependent methyl migration to produce 3-hydroxy-3-methyl-2-ketobutyrate (HMKB). In the reductase reaction, this 2-ketoacid undergoes a metal-dependent reduction by NADPH to yield (R)-2,3-dihydroxy-isovalerate. The sequence is that of Ketol-acid reductoisomerase (NADP(+)) from Jannaschia sp. (strain CCS1).